We begin with the raw amino-acid sequence, 775 residues long: Zinc finger protein GLIS3 (775 aa).

Disordered stretches follow at residues 121–147 (TESSHSPYPSPRHSSTRSHSARSKKRA) and 282–314 (PGSTVDLPPAPPLPPLPPPPGPPPPYHAHAHLH). Positions 123–133 (SSHSPYPSPRH) are enriched in low complexity. Basic residues predominate over residues 134-147 (SSTRSHSARSKKRA). Residues 289 to 307 (PPAPPLPPLPPPPGPPPPY) show a composition bias toward pro residues. The segment at 345-370 (HCCRWIDCSALYDQQEELVRHIEKVH) adopts a C2H2-type 1 zinc-finger fold. The C2H2-type 2; atypical zinc-finger motif lies at 379–406 (FTCFWAGCPRRYKPFNARYKLLIHMRVH). 3 C2H2-type zinc fingers span residues 412 to 436 (NKCTFEGCEKAFSRLENLKIHLRSH), 442 to 466 (YLCQHPGCQKAFSNSSDRAKHQRTH), and 472 to 496 (YACQIPGCTKRYTDPSSLRKHVKAH). Disordered regions lie at residues 485–512 (DPSSLRKHVKAHSSKEQQARKKLRSSTE) and 529–665 (PATS…QPNG). A Bipartite nuclear localization signal motif is present at residues 491–507 (KHVKAHSSKEQQARKKL). The span at 497-512 (SSKEQQARKKLRSSTE) shows a compositional bias: basic and acidic residues. Composition is skewed to polar residues over residues 557–567 (IFSSNYSSRSG), 588–600 (VQGSPHNPSSQLP), and 632–663 (SILQRTQPPYTQQPSGSHLKSYQPETNSSFQP).

The protein belongs to the GLI C2H2-type zinc-finger protein family. As to expression, in the adult, expressed at high levels in the kidney and at lower levels in the brain, skeletal muscle, pancreas, liver, lung, thymus and ovary.

The protein resides in the nucleus. Acts both as a repressor and an activator of transcription. Binds to the consensus sequence 5'-GACCACCCAC-3'. This chain is Zinc finger protein GLIS3 (GLIS3), found in Homo sapiens (Human).